Consider the following 273-residue polypeptide: 4-hydroxy-tetrahydrodipicolinate reductase (273 aa).

NAD(+) is bound at residue 12–17; sequence GANGRM. R39 contacts NADP(+). NAD(+)-binding positions include 102–104 and 126–129; these read GTT and AANF. H159 acts as the Proton donor/acceptor in catalysis. H160 serves as a coordination point for (S)-2,3,4,5-tetrahydrodipicolinate. Catalysis depends on K163, which acts as the Proton donor. Position 169-170 (169-170) interacts with (S)-2,3,4,5-tetrahydrodipicolinate; that stretch reads GT.

The protein belongs to the DapB family. In terms of assembly, homotetramer.

The protein resides in the cytoplasm. The catalysed reaction is (S)-2,3,4,5-tetrahydrodipicolinate + NAD(+) + H2O = (2S,4S)-4-hydroxy-2,3,4,5-tetrahydrodipicolinate + NADH + H(+). It catalyses the reaction (S)-2,3,4,5-tetrahydrodipicolinate + NADP(+) + H2O = (2S,4S)-4-hydroxy-2,3,4,5-tetrahydrodipicolinate + NADPH + H(+). The protein operates within amino-acid biosynthesis; L-lysine biosynthesis via DAP pathway; (S)-tetrahydrodipicolinate from L-aspartate: step 4/4. Functionally, catalyzes the conversion of 4-hydroxy-tetrahydrodipicolinate (HTPA) to tetrahydrodipicolinate. The sequence is that of 4-hydroxy-tetrahydrodipicolinate reductase from Cronobacter sakazakii (strain ATCC BAA-894) (Enterobacter sakazakii).